The following is a 195-amino-acid chain: Probable nicotinate-nucleotide adenylyltransferase (195 aa).

Belongs to the NadD family.

It carries out the reaction nicotinate beta-D-ribonucleotide + ATP + H(+) = deamido-NAD(+) + diphosphate. Its pathway is cofactor biosynthesis; NAD(+) biosynthesis; deamido-NAD(+) from nicotinate D-ribonucleotide: step 1/1. In terms of biological role, catalyzes the reversible adenylation of nicotinate mononucleotide (NaMN) to nicotinic acid adenine dinucleotide (NaAD). The chain is Probable nicotinate-nucleotide adenylyltransferase from Gluconobacter oxydans (strain 621H) (Gluconobacter suboxydans).